A 606-amino-acid chain; its full sequence is Threonine--tRNA ligase (606 aa).

The segment at 212-503 is catalytic; it reads DHRKLGVEMK…LLEHTAGELP (292 aa). Residues cysteine 304, histidine 355, and histidine 480 each contribute to the Zn(2+) site.

The protein belongs to the class-II aminoacyl-tRNA synthetase family. Homodimer. Zn(2+) is required as a cofactor.

Its subcellular location is the cytoplasm. It carries out the reaction tRNA(Thr) + L-threonine + ATP = L-threonyl-tRNA(Thr) + AMP + diphosphate + H(+). Its function is as follows. Catalyzes the attachment of threonine to tRNA(Thr) in a two-step reaction: L-threonine is first activated by ATP to form Thr-AMP and then transferred to the acceptor end of tRNA(Thr). Also edits incorrectly charged L-seryl-tRNA(Thr). The chain is Threonine--tRNA ligase from Campylobacter concisus (strain 13826).